The sequence spans 302 residues: UDP-N-acetylenolpyruvoylglucosamine reductase (302 aa).

The FAD-binding PCMH-type domain maps to 31 to 196; it reads KIGGPADVLA…LRAWISLERG (166 aa). R175 is a catalytic residue. The active-site Proton donor is S225. E295 is an active-site residue.

This sequence belongs to the MurB family. The cofactor is FAD.

It localises to the cytoplasm. It carries out the reaction UDP-N-acetyl-alpha-D-muramate + NADP(+) = UDP-N-acetyl-3-O-(1-carboxyvinyl)-alpha-D-glucosamine + NADPH + H(+). It participates in cell wall biogenesis; peptidoglycan biosynthesis. Its function is as follows. Cell wall formation. This chain is UDP-N-acetylenolpyruvoylglucosamine reductase, found in Caldanaerobacter subterraneus subsp. tengcongensis (strain DSM 15242 / JCM 11007 / NBRC 100824 / MB4) (Thermoanaerobacter tengcongensis).